The primary structure comprises 240 residues: Ribonuclease 3 (240 aa).

The 131-residue stretch at 4 to 134 folds into the RNase III domain; that stretch reads SRQPLLDALG…LLGAIYLQHG (131 aa). Residue Glu-44 coordinates Mg(2+). Asp-48 is an active-site residue. Asp-120 and Glu-123 together coordinate Mg(2+). Glu-123 is an active-site residue. Residues 161 to 229 form the DRBM domain; the sequence is DWKTSLQELT…AAAAWKALEV (69 aa).

The protein belongs to the ribonuclease III family. Homodimer. Mg(2+) serves as cofactor.

It localises to the cytoplasm. The enzyme catalyses Endonucleolytic cleavage to 5'-phosphomonoester.. Functionally, digests double-stranded RNA. Involved in the processing of primary rRNA transcript to yield the immediate precursors to the large and small rRNAs (23S and 16S). Processes some mRNAs, and tRNAs when they are encoded in the rRNA operon. Processes pre-crRNA and tracrRNA of type II CRISPR loci if present in the organism. This Mycobacterium bovis (strain ATCC BAA-935 / AF2122/97) protein is Ribonuclease 3.